A 127-amino-acid chain; its full sequence is Large ribosomal subunit protein bL12 (127 aa).

Belongs to the bacterial ribosomal protein bL12 family. As to quaternary structure, homodimer. Part of the ribosomal stalk of the 50S ribosomal subunit. Forms a multimeric L10(L12)X complex, where L10 forms an elongated spine to which 2 to 4 L12 dimers bind in a sequential fashion. Binds GTP-bound translation factors.

Its function is as follows. Forms part of the ribosomal stalk which helps the ribosome interact with GTP-bound translation factors. Is thus essential for accurate translation. This chain is Large ribosomal subunit protein bL12, found in Phytoplasma mali (strain AT).